The sequence spans 61 residues: Small ribosomal subunit protein uS14B (61 aa).

Cysteine 24, cysteine 27, cysteine 40, and cysteine 43 together coordinate Zn(2+).

It belongs to the universal ribosomal protein uS14 family. Zinc-binding uS14 subfamily. In terms of assembly, part of the 30S ribosomal subunit. Contacts proteins S3 and S10. Requires Zn(2+) as cofactor.

Its function is as follows. Binds 16S rRNA, required for the assembly of 30S particles and may also be responsible for determining the conformation of the 16S rRNA at the A site. In Mycolicibacterium smegmatis (strain ATCC 700084 / mc(2)155) (Mycobacterium smegmatis), this protein is Small ribosomal subunit protein uS14B.